The chain runs to 187 residues: MRLVHAVLLPGIIVFVSNGNLLHAHALHEDETGVTAGRQLRAAASEVFGLSRASFGLGKAQDPLDKFFRKIINSRKPIETSYSAKGIHEKIIKAYDRHVFESKKAHDRHVSKSKKAHGRHVSKSKMAHDRHVSKSEKAPIQYASVADYLKKIYPGTDIERIVSTLKRHDEVGAKDLGAKLQTAVASQ.

The N-terminal stretch at 1 to 19 (MRLVHAVLLPGIIVFVSNG) is a signal peptide. The RxLR motif lies at 38 to 41 (RQLR). Residues 50–92 (LSRASFGLGKAQDPLDKFFRKIINSRKPIETSYSAKGIHEKII) form a leucine heptad repeat region region. 4 repeat units span residues 93–103 (KAYDRHVFESK), 104–114 (KAHDRHVSKSK), 115–125 (KAHGRHVSKSK), and 126–136 (MAHDRHVSKSE). The tract at residues 93–136 (KAYDRHVFESKKAHDRHVSKSKKAHGRHVSKSKMAHDRHVSKSE) is 4 X 11 AA tandem repeats. Positions 104 to 136 (KAHDRHVSKSKKAHGRHVSKSKMAHDRHVSKSE) are disordered. The span at 111-125 (SKSKKAHGRHVSKSK) shows a compositional bias: basic residues. The segment covering 126-136 (MAHDRHVSKSE) has biased composition (basic and acidic residues). The highly variable C-terminus domain stretch occupies residues 137–187 (KAPIQYASVADYLKKIYPGTDIERIVSTLKRHDEVGAKDLGAKLQTAVASQ).

This sequence belongs to the RxLR effector family.

It is found in the secreted. Its subcellular location is the host nucleus. It localises to the host nucleolus. The protein resides in the host cytoplasm. Functionally, secreted effector that acts as an elicitor of hypersensitive response (HR) specifically on plants carrying defense protein RPP13. Recognition of ATR13 by RPP13 initiates defense responses that are effective against oomycete, bacterial and viral pathogens. Due to high polymorphism, ATR13-Emoy2 does not recognize RPP13-Nd, the RPP13 defense protein from Arabidopsis thaliana ecotype Niederzenz. ATR13-Emoy2 is recognized by RPP13 variants RPP13-UKID44, RPP13-UKID65 and RPP13-UKID71. This is Virulence protein ATR13 from Hyaloperonospora arabidopsidis (strain Emoy2) (Downy mildew agent).